The primary structure comprises 1489 residues: DNA-directed RNA polymerase subunit beta (1489 aa).

It belongs to the RNA polymerase beta chain family. The RNAP catalytic core consists of 2 alpha, 1 beta, 1 beta' and 1 omega subunit. When a sigma factor is associated with the core the holoenzyme is formed, which can initiate transcription.

The catalysed reaction is RNA(n) + a ribonucleoside 5'-triphosphate = RNA(n+1) + diphosphate. Functionally, DNA-dependent RNA polymerase catalyzes the transcription of DNA into RNA using the four ribonucleoside triphosphates as substrates. In Koribacter versatilis (strain Ellin345), this protein is DNA-directed RNA polymerase subunit beta.